Reading from the N-terminus, the 478-residue chain is DNA-directed RNA polymerase subunit alpha (478 aa).

Positions 1–341 are alpha N-terminal domain (alpha-NTD); that stretch reads MNKKIQDFFL…LDCMRLLNYE (341 aa). The alpha C-terminal domain (alpha-CTD) stretch occupies residues 365–478; the sequence is RFYNSREDKT…KLGSRNEKNL (114 aa).

The protein belongs to the RNA polymerase alpha chain family. In terms of assembly, in plastids the minimal PEP RNA polymerase catalytic core is composed of four subunits: alpha, beta, beta', and beta''. When a (nuclear-encoded) sigma factor is associated with the core the holoenzyme is formed, which can initiate transcription.

Its subcellular location is the plastid. It is found in the chloroplast. The enzyme catalyses RNA(n) + a ribonucleoside 5'-triphosphate = RNA(n+1) + diphosphate. Its function is as follows. DNA-dependent RNA polymerase catalyzes the transcription of DNA into RNA using the four ribonucleoside triphosphates as substrates. This Tetradesmus obliquus (Green alga) protein is DNA-directed RNA polymerase subunit alpha (rpoA).